Consider the following 202-residue polypeptide: MSVKYIATSKLPTPWGVFAMHGFEETATGKEHVALTFGQLDPTEPMLGRIHSECLTGDALFSLRCDCGFQLQAAMQSIAEQGQGFLLYLRQEGRGIGLLNKIRAYELQDAGANTVEANERLGFEADMRKYDMILPMLTQIGVTKVKLMTNNPRKVMAMQNMGIEVAERIPLQVGKNRYNESYLKTKSTELGHMMSEYHFHDE.

Arg-49–Glu-53 serves as a coordination point for GTP. The Zn(2+) site is built by Cys-54, Cys-65, and Cys-67. Residues Gln-70, Glu-92 to Arg-94, and Thr-114 each bind GTP. Asp-126 acts as the Proton acceptor in catalysis. Catalysis depends on Arg-128, which acts as the Nucleophile. GTP contacts are provided by Thr-149 and Lys-154.

The protein belongs to the GTP cyclohydrolase II family. Zn(2+) serves as cofactor.

It carries out the reaction GTP + 4 H2O = 2,5-diamino-6-hydroxy-4-(5-phosphoribosylamino)-pyrimidine + formate + 2 phosphate + 3 H(+). The protein operates within cofactor biosynthesis; riboflavin biosynthesis; 5-amino-6-(D-ribitylamino)uracil from GTP: step 1/4. In terms of biological role, catalyzes the conversion of GTP to 2,5-diamino-6-ribosylamino-4(3H)-pyrimidinone 5'-phosphate (DARP), formate and pyrophosphate. In Shewanella frigidimarina (strain NCIMB 400), this protein is GTP cyclohydrolase-2.